Reading from the N-terminus, the 481-residue chain is Beta-amyrin 16-beta-monooxygenase (481 aa).

A helical membrane pass occupies residues 4-24; the sequence is LFIIISLVIVILTTIFILSNL. C428 serves as a coordination point for heme.

It belongs to the cytochrome P450 family. It depends on heme as a cofactor. As to expression, highly expressed in roots. Expressed at very low levels in leaves and petals.

Its subcellular location is the membrane. It carries out the reaction beta-amyrin + reduced [NADPH--hemoprotein reductase] + O2 = maniladiol + oxidized [NADPH--hemoprotein reductase] + H2O + H(+). The enzyme catalyses oleanolate + reduced [NADPH--hemoprotein reductase] + O2 = cochalate + oxidized [NADPH--hemoprotein reductase] + H2O + H(+). Functionally, involved in triterpenoid saponin biosynthesis in roots. Catalyzes the hydroxylation of beta-amyrin at the C-16 beta position to form maniladiol. Is also able to oxidize oleanolat to cochalate. Has weak activity catalyzing the three-step oxidation at C-28 of beta-amyrin to form oleanolate. This is Beta-amyrin 16-beta-monooxygenase from Platycodon grandiflorus (Balloon flower).